The sequence spans 521 residues: AAA ATPase forming ring-shaped complexes (521 aa).

A coiled-coil region spans residues 4–44 (TEDLAALNDRLMAKNHALAEALSRAGKELTKAKSQLAQLAQ). An ATP-binding site is contributed by 235–240 (GNGKTM).

The protein belongs to the AAA ATPase family. As to quaternary structure, homohexamer. Assembles into a hexameric ring structure.

In Bifidobacterium longum (strain DJO10A), this protein is AAA ATPase forming ring-shaped complexes.